A 213-amino-acid chain; its full sequence is Proteasome subunit beta 1 (213 aa).

Positions 1-18 (MVFIAVFNGVFAMSSLPG) are cleaved as a propeptide — removed in mature form; by autocatalysis. T19 serves as the catalytic Nucleophile.

The protein belongs to the peptidase T1B family. In terms of assembly, the 20S proteasome core is composed of 14 alpha and 14 beta subunits that assemble into four stacked heptameric rings, resulting in a barrel-shaped structure. The two inner rings, each composed of seven catalytic beta subunits, are sandwiched by two outer rings, each composed of seven alpha subunits. The catalytic chamber with the active sites is on the inside of the barrel. Has a gated structure, the ends of the cylinder being occluded by the N-termini of the alpha-subunits. Is capped at one or both ends by the proteasome regulatory ATPase, PAN.

The protein localises to the cytoplasm. The catalysed reaction is Cleavage of peptide bonds with very broad specificity.. With respect to regulation, the formation of the proteasomal ATPase PAN-20S proteasome complex, via the docking of the C-termini of PAN into the intersubunit pockets in the alpha-rings, triggers opening of the gate for substrate entry. Interconversion between the open-gate and close-gate conformations leads to a dynamic regulation of the 20S proteasome proteolysis activity. Functionally, component of the proteasome core, a large protease complex with broad specificity involved in protein degradation. This is Proteasome subunit beta 1 from Staphylothermus marinus (strain ATCC 43588 / DSM 3639 / JCM 9404 / F1).